The sequence spans 624 residues: UvrABC system protein C (624 aa).

Positions 25–104 (AEPGVYFMRD…IKQHQPHFNV (80 aa)) constitute a GIY-YIG domain. The UVR domain maps to 214 to 249 (SELIDTLTPQMEAAAENLNFEQAARIRDQINGLKTL).

It belongs to the UvrC family. Interacts with UvrB in an incision complex.

It localises to the cytoplasm. The UvrABC repair system catalyzes the recognition and processing of DNA lesions. UvrC both incises the 5' and 3' sides of the lesion. The N-terminal half is responsible for the 3' incision and the C-terminal half is responsible for the 5' incision. This chain is UvrABC system protein C, found in Cyanothece sp. (strain PCC 7425 / ATCC 29141).